The primary structure comprises 20 residues: Short cationic peptide-4d (20 aa).

E20 bears the Glutamic acid 1-amide mark.

As to expression, expressed by the venom gland.

It is found in the secreted. The sequence is that of Short cationic peptide-4d from Cupiennius salei (American wandering spider).